A 459-amino-acid chain; its full sequence is UDP-N-acetylmuramoylalanine--D-glutamate ligase (459 aa).

Residue 119–125 (GTNGKTT) coordinates ATP.

This sequence belongs to the MurCDEF family.

It is found in the cytoplasm. It carries out the reaction UDP-N-acetyl-alpha-D-muramoyl-L-alanine + D-glutamate + ATP = UDP-N-acetyl-alpha-D-muramoyl-L-alanyl-D-glutamate + ADP + phosphate + H(+). The protein operates within cell wall biogenesis; peptidoglycan biosynthesis. Cell wall formation. Catalyzes the addition of glutamate to the nucleotide precursor UDP-N-acetylmuramoyl-L-alanine (UMA). The chain is UDP-N-acetylmuramoylalanine--D-glutamate ligase from Lactiplantibacillus plantarum (strain ATCC BAA-793 / NCIMB 8826 / WCFS1) (Lactobacillus plantarum).